Consider the following 131-residue polypeptide: Small ribosomal subunit protein uS8 (131 aa).

It belongs to the universal ribosomal protein uS8 family. Part of the 30S ribosomal subunit. Contacts proteins S5 and S12.

Its function is as follows. One of the primary rRNA binding proteins, it binds directly to 16S rRNA central domain where it helps coordinate assembly of the platform of the 30S subunit. In Rhizorhabdus wittichii (strain DSM 6014 / CCUG 31198 / JCM 15750 / NBRC 105917 / EY 4224 / RW1) (Sphingomonas wittichii), this protein is Small ribosomal subunit protein uS8.